A 548-amino-acid polypeptide reads, in one-letter code: Hydroxylamine reductase (548 aa).

Positions 3, 6, 15, and 21 each coordinate [4Fe-4S] cluster. 8 residues coordinate hybrid [4Fe-2O-2S] cluster: H239, E263, C307, C401, C429, C454, E489, and K491. Residue C401 is modified to Cysteine persulfide.

This sequence belongs to the HCP family. It depends on [4Fe-4S] cluster as a cofactor. The cofactor is hybrid [4Fe-2O-2S] cluster.

It localises to the cytoplasm. It carries out the reaction A + NH4(+) + H2O = hydroxylamine + AH2 + H(+). In terms of biological role, catalyzes the reduction of hydroxylamine to form NH(3) and H(2)O. This Desulfosudis oleivorans (strain DSM 6200 / JCM 39069 / Hxd3) (Desulfococcus oleovorans) protein is Hydroxylamine reductase.